The sequence spans 286 residues: F-box/SPRY domain-containing protein 1 (286 aa).

Residue Ala-2 is modified to N-acetylalanine. The region spanning 33–82 is the F-box domain; the sequence is SGVGGRLPSRVLELVFSYLELSELRSCALVCKHWYRCLHGDENSEVWRSL. One can recognise a B30.2/SPRY domain in the interval 92–284; the sequence is LRTDILCNLP…VTLVYLGKPL (193 aa).

The protein belongs to the FBXO45/Fsn family. As to quaternary structure, forms a complex with MYCBP2 and SKP1. Interacts with HEY1; leading to FBXO45 nuclear translocation. Interacts (via SPRY domain) with CDH2. As to expression, expressed speciffically in the central nervous system, including cerebellum, medulla oblongata, olfactory bulb, hippocampus, cortex and brain stem.

It is found in the secreted. Its subcellular location is the postsynaptic cell membrane. The protein resides in the presynaptic cell membrane. It localises to the nucleus. The protein operates within protein modification; protein ubiquitination. Functionally, component of E3 ubiquitin ligase complex consisting of FBXO45, MYCBP2 and SKP1. Functions in substrate recognition but plays also an important role in assembly of the complex. Required for normal neuromuscular synaptogenesis, axon pathfinding and neuronal migration. Regulates neuron migration during brain development through interaction with N-cadherin/CDH2 after secretion via a non-classical mechanism. Plays a role in the regulation of neurotransmission at mature neurons. May control synaptic activity by controlling UNC13A via ubiquitin dependent pathway. Specifically recognizes TP73, promoting its ubiquitination and degradation. Polyubiquitinates NMNAT2, an adenylyltransferase that acts as an axon maintenance factor, and regulates its stability and degradation by the proteasome. Acts also by ubiquitinating FBXW7 during prolonged mitotic arrest and promotes FBXW7 proteasomal degradation. Induces subsequently an increase in mitotic slippage and prevents mitotic cell death. In response to influenza infection, mediates interferon-lambda receptor IFNLR1 polyubiquitination and degradation through the ubiquitin-proteasome system by docking with its intracellular receptor domain. The protein is F-box/SPRY domain-containing protein 1 of Mus musculus (Mouse).